Consider the following 149-residue polypeptide: Large ribosomal subunit protein bL9 (149 aa).

This sequence belongs to the bacterial ribosomal protein bL9 family.

In terms of biological role, binds to the 23S rRNA. The polypeptide is Large ribosomal subunit protein bL9 (Fervidobacterium nodosum (strain ATCC 35602 / DSM 5306 / Rt17-B1)).